The chain runs to 302 residues: 4-diphosphocytidyl-2-C-methyl-D-erythritol kinase (302 aa).

The active site involves K32. Residue 115-125 (PMGGGVGGGSS) coordinates ATP. The active site involves D157.

Belongs to the GHMP kinase family. IspE subfamily.

The enzyme catalyses 4-CDP-2-C-methyl-D-erythritol + ATP = 4-CDP-2-C-methyl-D-erythritol 2-phosphate + ADP + H(+). The protein operates within isoprenoid biosynthesis; isopentenyl diphosphate biosynthesis via DXP pathway; isopentenyl diphosphate from 1-deoxy-D-xylulose 5-phosphate: step 3/6. In terms of biological role, catalyzes the phosphorylation of the position 2 hydroxy group of 4-diphosphocytidyl-2C-methyl-D-erythritol. The sequence is that of 4-diphosphocytidyl-2-C-methyl-D-erythritol kinase from Actinobacillus succinogenes (strain ATCC 55618 / DSM 22257 / CCUG 43843 / 130Z).